Here is a 447-residue protein sequence, read N- to C-terminus: Chaperone protein dnaJ A7B, chloroplastic (447 aa).

Residues 1-86 constitute a chloroplast transit peptide; it reads MALLQFGGTL…HRRSSRFIVR (86 aa). One can recognise a J domain in the interval 90-154; the sequence is DFYSTLGVSR…EKRSIYDKYG (65 aa). The segment at 217–298 adopts a CR-type zinc-finger fold; sequence GVEKEIEITR…CGGDGRVRKT (82 aa). Cys-230, Cys-233, Cys-247, Cys-250, Cys-273, Cys-276, Cys-286, and Cys-289 together coordinate Zn(2+). CXXCXGXG motif repeat units lie at residues 230–237, 247–254, 273–280, and 286–293; these read CNTCDGTG, CKTCGGQG, CNTCGGTG, and CNTCGGDG.

This sequence belongs to the DnaJ family. As to quaternary structure, interacts with PCNA. In terms of tissue distribution, expressed in roots, stems, leaves and panicles.

It localises to the plastid. The protein resides in the chloroplast. Plays pivotal roles in chloroplast development. Is essential for the regulation of chloroplast development and differentiation. The polypeptide is Chaperone protein dnaJ A7B, chloroplastic (Oryza sativa subsp. japonica (Rice)).